An 821-amino-acid polypeptide reads, in one-letter code: Ent-pimara-8(14),15-diene synthase (821 aa).

Residues Asp556, Asp560, Asn701, Thr705, and Glu709 each coordinate Mg(2+). The DDXXD motif motif lies at 556 to 560 (DDFFD).

The protein belongs to the terpene synthase family. Requires Mg(2+) as cofactor. Highly expressed in roots, at intermediate levels in stems and at lower levels in leaves.

The enzyme catalyses ent-copalyl diphosphate = ent-pimara-8(14),15-diene + diphosphate. It participates in secondary metabolite biosynthesis; terpenoid biosynthesis. Involved in the biosynthesis of ent-kaurene diterpenoids natural products. Catalyzes the conversion of ent-copalyl diphosphate to ent-pimara-8(14),15-diene. The sequence is that of Ent-pimara-8(14),15-diene synthase from Oryza sativa subsp. japonica (Rice).